The following is a 210-amino-acid chain: Na(+)-translocating NADH-quinone reductase subunit D (210 aa).

The next 6 membrane-spanning stretches (helical) occupy residues 10-30 (ILFAPFLDNNPIALQVLGVCS), 42-62 (FVMTLAVMFVTAFSNLFVSLI), 72-92 (IIVQMAIIASLVIVVDQVLKA), 103-123 (VFVGLIITNCIVMGRAEAYAM), 131-151 (FIDGVGNGLGYGFVLITVAFF), and 178-198 (NGLMLLAPSAFFLIGFMIWAI).

Belongs to the NqrDE/RnfAE family. Composed of six subunits; NqrA, NqrB, NqrC, NqrD, NqrE and NqrF.

The protein resides in the cell inner membrane. The catalysed reaction is a ubiquinone + n Na(+)(in) + NADH + H(+) = a ubiquinol + n Na(+)(out) + NAD(+). Its function is as follows. NQR complex catalyzes the reduction of ubiquinone-1 to ubiquinol by two successive reactions, coupled with the transport of Na(+) ions from the cytoplasm to the periplasm. NqrA to NqrE are probably involved in the second step, the conversion of ubisemiquinone to ubiquinol. The protein is Na(+)-translocating NADH-quinone reductase subunit D of Photobacterium profundum (strain SS9).